We begin with the raw amino-acid sequence, 318 residues long: Methionyl-tRNA formyltransferase (318 aa).

Residue serine 112–proline 115 participates in (6S)-5,6,7,8-tetrahydrofolate binding.

Belongs to the Fmt family.

It carries out the reaction L-methionyl-tRNA(fMet) + (6R)-10-formyltetrahydrofolate = N-formyl-L-methionyl-tRNA(fMet) + (6S)-5,6,7,8-tetrahydrofolate + H(+). Its function is as follows. Attaches a formyl group to the free amino group of methionyl-tRNA(fMet). The formyl group appears to play a dual role in the initiator identity of N-formylmethionyl-tRNA by promoting its recognition by IF2 and preventing the misappropriation of this tRNA by the elongation apparatus. The polypeptide is Methionyl-tRNA formyltransferase (Shewanella sp. (strain MR-4)).